A 130-amino-acid chain; its full sequence is Phosphomevalonate dehydratase small subunit (130 aa).

The Proton acceptor role is filled by Ser62.

The protein belongs to the AcnX type II small subunit family. Heterodimer composed of a large subunit (PMDh-L) and a small subunit (PMDh-S).

It carries out the reaction (R)-5-phosphomevalonate = (2E)-3-methyl-5-phosphooxypent-2-enoate + H2O. It functions in the pathway isoprenoid biosynthesis; isopentenyl diphosphate biosynthesis via mevalonate pathway. Component of a hydro-lyase that catalyzes the dehydration of mevalonate 5-phosphate (MVA5P) to form trans-anhydromevalonate 5-phosphate (tAHMP). Involved in the archaeal mevalonate (MVA) pathway, which provides fundamental precursors for isoprenoid biosynthesis, such as isopentenyl diphosphate (IPP) and dimethylallyl diphosphate (DMAPP). The chain is Phosphomevalonate dehydratase small subunit from Thermococcus sibiricus (strain DSM 12597 / MM 739).